Reading from the N-terminus, the 1320-residue chain is Bifunctional protein PutA (1320 aa).

Residues 228-574 (LSRSLNRIIG…SFVNRIADAT (347 aa)) are proline dehydrogenase. An aldehyde dehydrogenase region spans residues 653–1119 (QPVADGEMTP…LAHRPPNALN (467 aa)). Active-site residues include glutamate 883 and cysteine 917.

It in the N-terminal section; belongs to the proline dehydrogenase family. In the C-terminal section; belongs to the aldehyde dehydrogenase family. It depends on FAD as a cofactor.

The catalysed reaction is L-proline + a quinone = (S)-1-pyrroline-5-carboxylate + a quinol + H(+). The enzyme catalyses L-glutamate 5-semialdehyde + NAD(+) + H2O = L-glutamate + NADH + 2 H(+). Its pathway is amino-acid degradation; L-proline degradation into L-glutamate; L-glutamate from L-proline: step 1/2. It participates in amino-acid degradation; L-proline degradation into L-glutamate; L-glutamate from L-proline: step 2/2. Functionally, oxidizes proline to glutamate for use as a carbon and nitrogen source and also function as a transcriptional repressor of the put operon. The polypeptide is Bifunctional protein PutA (putA) (Salmonella typhimurium (strain LT2 / SGSC1412 / ATCC 700720)).